Reading from the N-terminus, the 124-residue chain is Putative ankyrin repeat protein RF_1087 (124 aa).

ANK repeat units follow at residues 17-46 (NDQK…NPNI), 50-79 (NGET…IIDS), and 83-112 (FERT…TIGN).

This Rickettsia felis (strain ATCC VR-1525 / URRWXCal2) (Rickettsia azadi) protein is Putative ankyrin repeat protein RF_1087.